Reading from the N-terminus, the 277-residue chain is uncharacterized protein (277 aa).

Residues 256–277 form a disordered region; the sequence is HTTTTTTSPSFTIPSNSSKGVS.

In terms of biological role, this protein may be involved in virus assembly. Essential for virus function. This is an uncharacterized protein from Saccharolobus solfataricus (Sulfolobus solfataricus).